The primary structure comprises 274 residues: NADPH-dependent 7-cyano-7-deazaguanine reductase (274 aa).

Residue 80 to 82 (VES) coordinates substrate. Residue 82-83 (SK) coordinates NADPH. The active-site Thioimide intermediate is C181. Catalysis depends on D188, which acts as the Proton donor. 220–221 (HE) contacts substrate. 249–250 (RG) contributes to the NADPH binding site.

The protein belongs to the GTP cyclohydrolase I family. QueF type 2 subfamily. Homodimer.

Its subcellular location is the cytoplasm. The catalysed reaction is 7-aminomethyl-7-carbaguanine + 2 NADP(+) = 7-cyano-7-deazaguanine + 2 NADPH + 3 H(+). The protein operates within tRNA modification; tRNA-queuosine biosynthesis. Catalyzes the NADPH-dependent reduction of 7-cyano-7-deazaguanine (preQ0) to 7-aminomethyl-7-deazaguanine (preQ1). The chain is NADPH-dependent 7-cyano-7-deazaguanine reductase from Burkholderia mallei (strain NCTC 10247).